The sequence spans 78 residues: Large ribosomal subunit protein bL28 (78 aa).

Positions 1-31 are disordered; that stretch reads MAAHCQVTGAEPGFGHSISHSHRRNKRRFDP.

The protein belongs to the bacterial ribosomal protein bL28 family.

This Arthrobacter sp. (strain FB24) protein is Large ribosomal subunit protein bL28.